The sequence spans 222 residues: N-(5'-phosphoribosyl)anthranilate isomerase (222 aa).

This sequence belongs to the TrpF family.

It catalyses the reaction N-(5-phospho-beta-D-ribosyl)anthranilate = 1-(2-carboxyphenylamino)-1-deoxy-D-ribulose 5-phosphate. It participates in amino-acid biosynthesis; L-tryptophan biosynthesis; L-tryptophan from chorismate: step 3/5. This is N-(5'-phosphoribosyl)anthranilate isomerase from Symbiobacterium thermophilum (strain DSM 24528 / JCM 14929 / IAM 14863 / T).